The chain runs to 419 residues: Zinc metalloproteinase-disintegrin-like atrolysin-A (419 aa).

One can recognise a Peptidase M12B domain in the interval 6 to 202 (RYVELVIVAD…YNPQCILNEP (197 aa)). Glu-9 is a Ca(2+) binding site. A glycan (N-linked (GlcNAc...) asparagine) is linked at Asn-72. A Ca(2+)-binding site is contributed by Asp-93. Intrachain disulfides connect Cys-117–Cys-197, Cys-157–Cys-181, and Cys-159–Cys-164. Position 142 (His-142) interacts with Zn(2+). Residue Glu-143 is part of the active site. Zn(2+) is bound by residues His-146 and His-152. The Ca(2+) site is built by Cys-197, Asn-200, Val-212, Asn-215, Leu-217, Glu-219, Glu-222, and Asp-225. A Disintegrin domain is found at 210–296 (PPVCGNELLE…DCPTDDFHRN (87 aa)). 14 disulfides stabilise this stretch: Cys-213–Cys-242, Cys-224–Cys-237, Cys-226–Cys-232, Cys-236–Cys-259, Cys-250–Cys-256, Cys-255–Cys-281, Cys-268–Cys-288, Cys-275–Cys-307, Cys-300–Cys-312, Cys-319–Cys-369, Cys-334–Cys-376, Cys-347–Cys-357, Cys-364–Cys-398, and Cys-392–Cys-403. Residues 274 to 276 (ECD) carry the D/ECD-tripeptide motif. 3 N-linked (GlcNAc...) asparagine glycosylation sites follow: Asn-326, Asn-338, and Asn-342.

Belongs to the venom metalloproteinase (M12B) family. P-III subfamily. P-IIIa sub-subfamily. Monomer. Requires Zn(2+) as cofactor. Expressed by the venom gland.

It is found in the secreted. The catalysed reaction is Cleavage of 3-Asn-|-Gln-4, 5-His-|-Leu-6, 10-His-|-Leu-11, 14-Ala-|-Leu-15 and 16-Tyr-|-Leu-17 in insulin B chain. Removes C-terminal Leu from small peptides.. Its function is as follows. Snake venom zinc metalloproteinase-disintegrin that causes hemorrhage by provoking the degradation of the sub-endothelial matrix proteins (fibronectin, laminin, type IV collagen, nidogen, and gelatins) and disturbances in platelet function. The recombinant cysteine-rich domain interacts with the alpha-2/beta-1 integrin (ITGA2/ITGB1) (collagen receptor), and inhibits the platelet aggregation induced by collagen. The protein is Zinc metalloproteinase-disintegrin-like atrolysin-A of Crotalus atrox (Western diamondback rattlesnake).